The sequence spans 274 residues: MAIYLYKTSTPSTRNGAVDSQVKSNPRNNLIYGQHHCGKGRNARGIITARHRGGGHKRLYRKIDFRRNANDIYGRIVTIEYDPNRNAYICLIHYGDGEKRYILHPRGAIIGDTIVSGTEVPIKMGNALPLTDMPLGTAIHNIEITLGKGGQLARAAGAVAKLIAKEGKSATLKLPSGEVRLISKNCSATVGQVGNVGVNQKSLGRAGSKRWLGKRPVVRGVVMNPVDHPHGGGEGRAPIGRKKPVTPWGYPALGRRTRKRKKYSETLILRRRSK.

The tract at residues Asn224 to Ala252 is disordered.

This sequence belongs to the universal ribosomal protein uL2 family. Part of the 50S ribosomal subunit.

The protein localises to the plastid. It is found in the chloroplast. The sequence is that of Large ribosomal subunit protein uL2cz/uL2cy (rpl2-A) from Capsella bursa-pastoris (Shepherd's purse).